The sequence spans 648 residues: Beta-glucuronidase (648 aa).

An N-terminal signal peptide occupies residues 1–22; it reads MSLKWSACWVALGQLLCSCALA. Residues asparagine 172 and asparagine 416 are each glycosylated (N-linked (GlcNAc...) asparagine). Glutamate 447 serves as the catalytic Proton donor. Residue asparagine 627 is glycosylated (N-linked (GlcNAc...) asparagine).

Belongs to the glycosyl hydrolase 2 family. Homotetramer.

Its subcellular location is the lysosome. It localises to the endoplasmic reticulum. It carries out the reaction a beta-D-glucuronoside + H2O = D-glucuronate + an alcohol. Its activity is regulated as follows. Inhibited by L-aspartic acid. Its function is as follows. Plays an important role in the degradation of dermatan and keratan sulfates. This chain is Beta-glucuronidase (Gusb), found in Mus musculus (Mouse).